The primary structure comprises 994 residues: Phosphoenolpyruvate carboxylase (994 aa).

The disordered stretch occupies residues 1-67; it reads MKAVRSDKTT…GRTREDKDHP (67 aa). Low complexity-rich tracts occupy residues 9–24 and 34–57; these read TTQA…PAKA and AAPQ…PKAN. Catalysis depends on residues His204 and Lys646.

It belongs to the PEPCase type 1 family. Requires Mg(2+) as cofactor.

The catalysed reaction is oxaloacetate + phosphate = phosphoenolpyruvate + hydrogencarbonate. In terms of biological role, forms oxaloacetate, a four-carbon dicarboxylic acid source for the tricarboxylic acid cycle. The chain is Phosphoenolpyruvate carboxylase from Paraburkholderia xenovorans (strain LB400).